Consider the following 270-residue polypeptide: BPI fold-containing family A member 5 (270 aa).

The signal sequence occupies residues 1 to 19 (MFLAGSFIVLCGLLAQSTA). Cysteines 196 and 238 form a disulfide.

The protein belongs to the BPI/LBP/Plunc superfamily. Plunc family. Expressed in interpapillar epithelium of the anterior part of the tongue.

The protein localises to the secreted. In terms of biological role, may play a role in innate immunity in the oral cavity. This chain is BPI fold-containing family A member 5 (Bpifa5), found in Mus musculus (Mouse).